Here is a 435-residue protein sequence, read N- to C-terminus: DMATS-type prenyltransferase fscG (435 aa).

Dimethylallyl diphosphate-binding residues include Arg111, Lys193, Tyr195, Arg259, Lys261, Tyr263, Tyr352, and Tyr423.

It belongs to the tryptophan dimethylallyltransferase family.

It functions in the pathway secondary metabolite biosynthesis. Functionally, DMATS-type prenyltransferase; part of the fragmented gene cluster that mediates the biosynthesis of fusarochromene, a tryptophan-derived metabolite closely related to a group of mycotoxins including fusarochromanone. Within the pathway, fscG catalyzes the prenylation of the primary alcohol produced by fscA which is necessary for the formation of the chromene ring by the oxidoreductase fscI. The first step of the pathway is the epimerization of L-tryptophan to D-tryptophan in the presence of the NRPS-like tryptophan epimerase fscC. D-tryptophan is subsequently hydroxylated by the tryptophan 6-hydroxylase fscE to yield 6-hydroxytryptophan. The pyrrole ring undergoes cleavaged by the tryptophan 2,3-dioxygenase fscD and is finally converted to 4-hydroxykyrunenine by the hydrolase fscH. The NRPS-like oxidoreductase fscA reduces the carboxyl group to primary alcohol and the DMATS-type prenyltransferase fscG performs prenylation, followed by the formation of a chromene ring catalyzed by the oxidoreductase fscI, which leads to desacetylfusarochromene. Epoxidation by fscF and rearrangement reactions of chromene double bonds convert compound desacetylfusarochromene to fusarochromanones. Although specific acetyltransferases were not found near the fsc gene cluster, several predicted enzymes containing the N-acetyltransferase superfamily domain are present in the genome of F.equiseti. These predicted enzymes may have the potential to convert desacetylfusarochromene to fusarochromene. This Fusarium equiseti (Fusarium scirpi) protein is DMATS-type prenyltransferase fscG.